Here is a 382-residue protein sequence, read N- to C-terminus: Dual-specificity RNA methyltransferase RlmN (382 aa).

The active-site Proton acceptor is the glutamate 96. Positions 102–342 (QGKRGTLCVS…VRTTRGEDID (241 aa)) constitute a Radical SAM core domain. The cysteines at positions 109 and 345 are disulfide-linked. The [4Fe-4S] cluster site is built by cysteine 116, cysteine 120, and cysteine 123. S-adenosyl-L-methionine is bound by residues 170–171 (GE), serine 202, 224–226 (SLH), and asparagine 302. The S-methylcysteine intermediate role is filled by cysteine 345.

The protein belongs to the radical SAM superfamily. RlmN family. Requires [4Fe-4S] cluster as cofactor.

The protein localises to the cytoplasm. It catalyses the reaction adenosine(2503) in 23S rRNA + 2 reduced [2Fe-2S]-[ferredoxin] + 2 S-adenosyl-L-methionine = 2-methyladenosine(2503) in 23S rRNA + 5'-deoxyadenosine + L-methionine + 2 oxidized [2Fe-2S]-[ferredoxin] + S-adenosyl-L-homocysteine. The enzyme catalyses adenosine(37) in tRNA + 2 reduced [2Fe-2S]-[ferredoxin] + 2 S-adenosyl-L-methionine = 2-methyladenosine(37) in tRNA + 5'-deoxyadenosine + L-methionine + 2 oxidized [2Fe-2S]-[ferredoxin] + S-adenosyl-L-homocysteine. Specifically methylates position 2 of adenine 2503 in 23S rRNA and position 2 of adenine 37 in tRNAs. m2A2503 modification seems to play a crucial role in the proofreading step occurring at the peptidyl transferase center and thus would serve to optimize ribosomal fidelity. The chain is Dual-specificity RNA methyltransferase RlmN from Pseudomonas syringae pv. syringae (strain B728a).